A 182-amino-acid polypeptide reads, in one-letter code: Glycoprotein Q2 (182 aa).

The signal sequence occupies residues 1–20; it reads MHFVAVYILTHFHAYPGVAA. N-linked (GlcNAc...) asparagine; by host glycans are attached at residues asparagine 74 and asparagine 110.

In terms of assembly, interacts with isoform gQ2. The heterodimer gQ1-gQ2 associates with the glycoprotein complex gH-gL to form a tetrameric complex. The gH/gL/gQ1/gQ2 complex binds to host TNFRSF4. Glycosylated by host.

Its subcellular location is the virion membrane. It is found in the host endoplasmic reticulum-Golgi intermediate compartment. Functionally, plays a role in virus entry by participating in host receptor binding at the cell surface. The protein is Glycoprotein Q2 of Human herpesvirus 6B (strain Z29) (HHV-6 variant B).